We begin with the raw amino-acid sequence, 337 residues long: tRNA N6-adenosine threonylcarbamoyltransferase (337 aa).

Residues His-111 and His-115 each contribute to the Fe cation site. Residues 134–138 (LVSGG), Asp-167, Gly-180, and Asn-272 contribute to the substrate site. Fe cation is bound at residue Asp-300.

Belongs to the KAE1 / TsaD family. Fe(2+) serves as cofactor.

Its subcellular location is the cytoplasm. The enzyme catalyses L-threonylcarbamoyladenylate + adenosine(37) in tRNA = N(6)-L-threonylcarbamoyladenosine(37) in tRNA + AMP + H(+). Required for the formation of a threonylcarbamoyl group on adenosine at position 37 (t(6)A37) in tRNAs that read codons beginning with adenine. Is involved in the transfer of the threonylcarbamoyl moiety of threonylcarbamoyl-AMP (TC-AMP) to the N6 group of A37, together with TsaE and TsaB. TsaD likely plays a direct catalytic role in this reaction. The polypeptide is tRNA N6-adenosine threonylcarbamoyltransferase (Erwinia tasmaniensis (strain DSM 17950 / CFBP 7177 / CIP 109463 / NCPPB 4357 / Et1/99)).